Reading from the N-terminus, the 488-residue chain is Tyrosine-protein kinase Srms (488 aa).

The region spanning 51 to 112 (PFPQLFLALY…PITHVAKASP (62 aa)) is the SH3 domain. The SH2 domain maps to 120 to 212 (WYFSGVSRTQ…LIQNPLLQPC (93 aa)). The Protein kinase domain occupies 230–488 (FALGRKLGEG…KLHAIHRCHP (259 aa)). ATP-binding positions include 236-244 (LGEGYFGEV) and lysine 258. Aspartate 350 (proton acceptor) is an active-site residue. The residue at position 380 (tyrosine 380) is a Phosphotyrosine; by autocatalysis.

It belongs to the protein kinase superfamily. Tyr protein kinase family. SRC subfamily. In terms of assembly, interacts (via the SH2 and SH3 domains) with DOK1. Interacts with KHDRBS1/SAM68 and VIM. As to expression, highly expressed in most breast cancers (at protein level).

The protein localises to the cytoplasm. It catalyses the reaction L-tyrosyl-[protein] + ATP = O-phospho-L-tyrosyl-[protein] + ADP + H(+). Its function is as follows. Non-receptor tyrosine-protein kinase which phosphorylates DOK1 on tyrosine residues. Also phosphorylates KHDRBS1/SAM68 and VIM on tyrosine residues. Phosphorylation of KHDRBS1 is EGF-dependent. Phosphorylates OTUB1, promoting deubiquitination of RPTOR. The polypeptide is Tyrosine-protein kinase Srms (SRMS) (Homo sapiens (Human)).